The following is a 575-amino-acid chain: Interleukin-1 receptor-like 2 (575 aa).

The signal sequence occupies residues 1-19; the sequence is MWSLLLCGLSIALPLSVTA. Ig-like C2-type domains lie at 20-111, 126-211, and 222-318; these read DGCK…VNLT, PNLS…VLNG, and YGGS…MCHA. Residues 20–335 lie on the Extracellular side of the membrane; it reads DGCKDIFMKN…ILQLPAPDFR (316 aa). Residues Asn41, Asn59, Asn109, Asn127, Asn184, Asn234, Asn250, Asn266, and Asn299 are each glycosylated (N-linked (GlcNAc...) asparagine). Cys42 and Cys95 are joined by a disulfide. Cys146 and Cys195 are joined by a disulfide. Cysteines 249 and 316 form a disulfide. A helical transmembrane segment spans residues 336–356; it reads AYLIGGLIALVAVAVSVVYIY. Topologically, residues 357 to 575 are cytoplasmic; the sequence is NIFKIDIVLW…RRKKCTLTTG (219 aa). Residues 381 to 536 form the TIR domain; it reads KLYDAYVLYP…KFWKTVRYHM (156 aa). Glu467 is an active-site residue.

This sequence belongs to the interleukin-1 receptor family. Interacts with IL1RAP; the association is enhanced by IL36B indicative for an functional signaling complex and inhibited by IL36RN. As to expression, expressed in synovial fibroblasts and articular chondrocytes. Expressed in keratinocytes and monocyte-derived dendritic cells. Expressed in monocytes and myeloid dendritic cells; at protein level.

The protein localises to the membrane. It catalyses the reaction NAD(+) + H2O = ADP-D-ribose + nicotinamide + H(+). Its function is as follows. Receptor for interleukin-36 (IL36A, IL36B and IL36G). After binding to interleukin-36 associates with the coreceptor IL1RAP to form the interleukin-36 receptor complex which mediates interleukin-36-dependent activation of NF-kappa-B, MAPK and other pathways. The IL-36 signaling system is thought to be present in epithelial barriers and to take part in local inflammatory response; it is similar to the IL-1 system. Seems to be involved in skin inflammatory response by induction of the IL-23/IL-17/IL-22 pathway. This is Interleukin-1 receptor-like 2 (IL1RL2) from Homo sapiens (Human).